The following is a 438-amino-acid chain: Na(+)/H(+) antiporter NhaA (438 aa).

A run of 11 helical transmembrane segments spans residues 23 to 43, 62 to 82, 104 to 124, 133 to 153, 162 to 182, 185 to 205, 212 to 232, 302 to 322, 337 to 357, 372 to 392, and 410 to 430; these read FGGI…NSFL, FFIG…LFFL, SFPV…YFFL, GFGI…MLLG, VFLI…IALF, TNLK…LAIL, SLIP…QSGI, FLAP…NAGV, LGVI…ITFI, WWHI…SMFI, and IAIL…LFAL.

This sequence belongs to the NhaA Na(+)/H(+) (TC 2.A.33) antiporter family.

The protein resides in the cell inner membrane. The enzyme catalyses Na(+)(in) + 2 H(+)(out) = Na(+)(out) + 2 H(+)(in). Na(+)/H(+) antiporter that extrudes sodium in exchange for external protons. This is Na(+)/H(+) antiporter NhaA from Helicobacter pylori (strain J99 / ATCC 700824) (Campylobacter pylori J99).